A 565-amino-acid chain; its full sequence is MSEQKLALNEYLKTDSDYLRGTIKEGLDSAVTGSFSDGDQQLIKFHGFYQQDDRDLRNERKEQKLEPLYSFMLRARVPGGICSPQQWLGVDKIASTLTSSNSIRLTTRQTFQYHGIPKRNLKTIIQDLDREALDSIAACGDVNRNVMCNPNPVESKLHEQAYAVAKQLSDHLLPHTRAYAEIWLDEEKLLSTEDETVEPVYGKTYLPRKFKMAVAVPPDNDVDVYTNDLGFIAVAENGELVGFNLTAGGGMGSTHGEVETFPRLADDFGFIKTEDVMKFAEAVMTVQRDWGNRVNRKRSRLKYTIVDHGYEQFKAEVELRAGVKFEPKRDVVIGDRGDRYGWVEGVDGKWHLTLFIESGRIKDLPGQTLQTGLREIAKIHKGDFRMTSNQNMIIAGVAAEDKATIEGLARKHGLLGQVLTQTRGHSIACVALPTCPLAMAEAERYFPEFIDHIDALQAKHGISEQAIVVRMTGCPNGCARPFAAEIGLVGKAPGRYNLYLGASFEGTRLNKMHRENIQEAEILAELDTLFGRYAVERDAGETFGNFTVRVGVVKAVIDAAKDFHG.

[4Fe-4S] cluster-binding residues include C429, C435, C474, and C478. C478 contributes to the siroheme binding site.

Belongs to the nitrite and sulfite reductase 4Fe-4S domain family. In terms of assembly, alpha(8)-beta(8). The alpha component is a flavoprotein, the beta component is a hemoprotein. Siroheme is required as a cofactor. Requires [4Fe-4S] cluster as cofactor.

The catalysed reaction is hydrogen sulfide + 3 NADP(+) + 3 H2O = sulfite + 3 NADPH + 4 H(+). It participates in sulfur metabolism; hydrogen sulfide biosynthesis; hydrogen sulfide from sulfite (NADPH route): step 1/1. Component of the sulfite reductase complex that catalyzes the 6-electron reduction of sulfite to sulfide. This is one of several activities required for the biosynthesis of L-cysteine from sulfate. The sequence is that of Sulfite reductase [NADPH] hemoprotein beta-component from Shewanella baltica (strain OS185).